The sequence spans 426 residues: Glutamate-1-semialdehyde 2,1-aminomutase (426 aa).

Lys-265 carries the N6-(pyridoxal phosphate)lysine modification.

This sequence belongs to the class-III pyridoxal-phosphate-dependent aminotransferase family. HemL subfamily. Homodimer. Requires pyridoxal 5'-phosphate as cofactor.

The protein localises to the cytoplasm. It catalyses the reaction (S)-4-amino-5-oxopentanoate = 5-aminolevulinate. It participates in porphyrin-containing compound metabolism; protoporphyrin-IX biosynthesis; 5-aminolevulinate from L-glutamyl-tRNA(Glu): step 2/2. The chain is Glutamate-1-semialdehyde 2,1-aminomutase from Marinobacter nauticus (strain ATCC 700491 / DSM 11845 / VT8) (Marinobacter aquaeolei).